The sequence spans 714 residues: Hormonally up-regulated neu tumor-associated kinase (714 aa).

Low complexity predominate over residues M1–A15. Residues M1 to A26 form a disordered region. Residues L62–L320 enclose the Protein kinase domain. Residues L68–V76 and K91 each bind ATP. The Proton acceptor role is filled by D186. Residues K437–L461 are compositionally biased toward basic and acidic residues. Disordered regions lie at residues K437 to L471, M518 to D552, and A590 to R660. Residues L599–L611 show a composition bias toward low complexity. A compositionally biased stretch (basic and acidic residues) spans A623 to G635.

The protein belongs to the protein kinase superfamily. CAMK Ser/Thr protein kinase family. SNF1 subfamily.

The catalysed reaction is L-seryl-[protein] + ATP = O-phospho-L-seryl-[protein] + ADP + H(+). The enzyme catalyses L-threonyl-[protein] + ATP = O-phospho-L-threonyl-[protein] + ADP + H(+). The protein is Hormonally up-regulated neu tumor-associated kinase (HUNK) of Pan troglodytes (Chimpanzee).